The chain runs to 77 residues: Cell division topological specificity factor (77 aa).

The protein belongs to the MinE family.

Prevents the cell division inhibition by proteins MinC and MinD at internal division sites while permitting inhibition at polar sites. This ensures cell division at the proper site by restricting the formation of a division septum at the midpoint of the long axis of the cell. This Helicobacter acinonychis (strain Sheeba) protein is Cell division topological specificity factor.